A 385-amino-acid chain; its full sequence is Putative ribosomal RNA large subunit methyltransferase MJ1653 (385 aa).

Positions 2-81 (TTKLYVDFGG…LDENYIREKI (80 aa)) constitute a PUA domain.

It belongs to the methyltransferase superfamily. RlmI family.

The protein resides in the cytoplasm. The chain is Putative ribosomal RNA large subunit methyltransferase MJ1653 from Methanocaldococcus jannaschii (strain ATCC 43067 / DSM 2661 / JAL-1 / JCM 10045 / NBRC 100440) (Methanococcus jannaschii).